Consider the following 425-residue polypeptide: Serine--tRNA ligase (425 aa).

An L-serine-binding site is contributed by 233-235 (TAE). 264-266 (RRE) is an ATP binding site. E287 is a binding site for L-serine. 351–354 (EISS) provides a ligand contact to ATP. L-serine is bound at residue S385.

Belongs to the class-II aminoacyl-tRNA synthetase family. Type-1 seryl-tRNA synthetase subfamily. As to quaternary structure, homodimer. The tRNA molecule binds across the dimer.

The protein resides in the cytoplasm. It carries out the reaction tRNA(Ser) + L-serine + ATP = L-seryl-tRNA(Ser) + AMP + diphosphate + H(+). The catalysed reaction is tRNA(Sec) + L-serine + ATP = L-seryl-tRNA(Sec) + AMP + diphosphate + H(+). It functions in the pathway aminoacyl-tRNA biosynthesis; selenocysteinyl-tRNA(Sec) biosynthesis; L-seryl-tRNA(Sec) from L-serine and tRNA(Sec): step 1/1. Functionally, catalyzes the attachment of serine to tRNA(Ser). Is also able to aminoacylate tRNA(Sec) with serine, to form the misacylated tRNA L-seryl-tRNA(Sec), which will be further converted into selenocysteinyl-tRNA(Sec). This is Serine--tRNA ligase from Prochlorococcus marinus (strain SARG / CCMP1375 / SS120).